The following is a 96-amino-acid chain: Small ribosomal subunit protein bS6 (96 aa).

This sequence belongs to the bacterial ribosomal protein bS6 family.

Its function is as follows. Binds together with bS18 to 16S ribosomal RNA. The protein is Small ribosomal subunit protein bS6 of Bacillus mycoides (strain KBAB4) (Bacillus weihenstephanensis).